The following is a 444-amino-acid chain: Phosphoglucosamine mutase (444 aa).

Residue S102 is the Phosphoserine intermediate of the active site. Positions 102, 241, 243, and 245 each coordinate Mg(2+). Phosphoserine is present on S102.

This sequence belongs to the phosphohexose mutase family. It depends on Mg(2+) as a cofactor. Post-translationally, activated by phosphorylation.

The catalysed reaction is alpha-D-glucosamine 1-phosphate = D-glucosamine 6-phosphate. In terms of biological role, catalyzes the conversion of glucosamine-6-phosphate to glucosamine-1-phosphate. This chain is Phosphoglucosamine mutase, found in Histophilus somni (strain 2336) (Haemophilus somnus).